The primary structure comprises 46 residues: MMEASPGLSIAITFAVILLALTGFSIYTSFGPPSKQLEDPFEDHED.

Residues 7-27 (GLSIAITFAVILLALTGFSIY) form a helical membrane-spanning segment.

It belongs to the PsbN family.

The protein localises to the cellular thylakoid membrane. May play a role in photosystem I and II biogenesis. The sequence is that of Protein PsbN from Synechococcus elongatus (strain ATCC 33912 / PCC 7942 / FACHB-805) (Anacystis nidulans R2).